The chain runs to 154 residues: Large ribosomal subunit protein uL23z (154 aa).

It belongs to the universal ribosomal protein uL23 family.

Functionally, binds to a specific region on the 26S rRNA. In Arabidopsis thaliana (Mouse-ear cress), this protein is Large ribosomal subunit protein uL23z (RPL23AA).